We begin with the raw amino-acid sequence, 455 residues long: Ribulose bisphosphate carboxylase large chain (455 aa).

The residue at position 5 (K5) is an N6,N6,N6-trimethyllysine. Residues N114 and T164 each contribute to the substrate site. K166 acts as the Proton acceptor in catalysis. K168 contacts substrate. The Mg(2+) site is built by K192, D194, and E195. K192 carries the N6-carboxylysine modification. The active-site Proton acceptor is the H285. The substrate site is built by R286, H318, and S370.

This sequence belongs to the RuBisCO large chain family. Type I subfamily. As to quaternary structure, heterohexadecamer of 8 large chains and 8 small chains; disulfide-linked. The disulfide link is formed within the large subunit homodimers. Requires Mg(2+) as cofactor. The disulfide bond which can form in the large chain dimeric partners within the hexadecamer appears to be associated with oxidative stress and protein turnover.

The protein resides in the plastid. It localises to the chloroplast. The catalysed reaction is 2 (2R)-3-phosphoglycerate + 2 H(+) = D-ribulose 1,5-bisphosphate + CO2 + H2O. The enzyme catalyses D-ribulose 1,5-bisphosphate + O2 = 2-phosphoglycolate + (2R)-3-phosphoglycerate + 2 H(+). RuBisCO catalyzes two reactions: the carboxylation of D-ribulose 1,5-bisphosphate, the primary event in carbon dioxide fixation, as well as the oxidative fragmentation of the pentose substrate in the photorespiration process. Both reactions occur simultaneously and in competition at the same active site. The chain is Ribulose bisphosphate carboxylase large chain from Lupinus microcarpus var. densiflorus (Whitewhorl lupine).